A 147-amino-acid chain; its full sequence is UPF0306 protein YhbP (147 aa).

The protein belongs to the UPF0306 family.

The protein is UPF0306 protein YhbP of Salmonella schwarzengrund (strain CVM19633).